The sequence spans 273 residues: Imidazole glycerol phosphate synthase subunit HisF (273 aa).

Catalysis depends on residues Asp-11 and Asp-134.

It belongs to the HisA/HisF family. As to quaternary structure, heterodimer of HisH and HisF.

It is found in the cytoplasm. The catalysed reaction is 5-[(5-phospho-1-deoxy-D-ribulos-1-ylimino)methylamino]-1-(5-phospho-beta-D-ribosyl)imidazole-4-carboxamide + L-glutamine = D-erythro-1-(imidazol-4-yl)glycerol 3-phosphate + 5-amino-1-(5-phospho-beta-D-ribosyl)imidazole-4-carboxamide + L-glutamate + H(+). The protein operates within amino-acid biosynthesis; L-histidine biosynthesis; L-histidine from 5-phospho-alpha-D-ribose 1-diphosphate: step 5/9. In terms of biological role, IGPS catalyzes the conversion of PRFAR and glutamine to IGP, AICAR and glutamate. The HisF subunit catalyzes the cyclization activity that produces IGP and AICAR from PRFAR using the ammonia provided by the HisH subunit. The sequence is that of Imidazole glycerol phosphate synthase subunit HisF from Methanosarcina acetivorans (strain ATCC 35395 / DSM 2834 / JCM 12185 / C2A).